Reading from the N-terminus, the 97-residue chain is Class II hydrophobin NC2 (97 aa).

The signal sequence occupies residues 1–17; it reads MQFTIATVLSLLTITLA. Cystine bridges form between C31–C79, C40–C70, C41–C53, and C80–C91. N-linked (GlcNAc...) asparagine glycosylation is present at N62.

Belongs to the cerato-ulmin hydrophobin family. As to quaternary structure, homotrimer. Further self-assembles to form highly ordered films at water-air interfaces through intermolecular interactions.

The protein resides in the secreted. The protein localises to the cell wall. In terms of biological role, aerial growth, conidiation, and dispersal of filamentous fungi in the environment rely upon a capability of their secreting small amphipathic proteins called hydrophobins (HPBs) with low sequence identity. Class I can self-assemble into an outermost layer of rodlet bundles on aerial cell surfaces, conferring cellular hydrophobicity that supports fungal growth, development and dispersal; whereas Class II form highly ordered films at water-air interfaces through intermolecular interactions but contribute nothing to the rodlet structure. NC2 is a class II hydrophobin that has the potential to adsorb to the hydrophobic interface at the hydrophobic-hydrophilic interface at very high rate but the predicted self-assembly NC2 film possesses a lower flexural rigidity than other class II hydrophobins such as HFBII from Hypocrea jecorina (also known as Trichoderma reesei). The protein is Class II hydrophobin NC2 of Neurospora crassa (strain ATCC 24698 / 74-OR23-1A / CBS 708.71 / DSM 1257 / FGSC 987).